A 61-amino-acid polypeptide reads, in one-letter code: Large ribosomal subunit protein uL30 (61 aa).

It belongs to the universal ribosomal protein uL30 family. As to quaternary structure, part of the 50S ribosomal subunit.

This is Large ribosomal subunit protein uL30 from Neisseria meningitidis serogroup C (strain 053442).